The following is a 491-amino-acid chain: Cobyric acid synthase (491 aa).

One can recognise a GATase cobBQ-type domain in the interval Pro-249 to Phe-439. Residue Cys-329 is the Nucleophile of the active site. His-431 is a catalytic residue.

The protein belongs to the CobB/CobQ family. CobQ subfamily.

It functions in the pathway cofactor biosynthesis; adenosylcobalamin biosynthesis. Its function is as follows. Catalyzes amidations at positions B, D, E, and G on adenosylcobyrinic A,C-diamide. NH(2) groups are provided by glutamine, and one molecule of ATP is hydrogenolyzed for each amidation. This is Cobyric acid synthase from Clostridium tetani (strain Massachusetts / E88).